The primary structure comprises 77 residues: UPF0291 protein RBAM_017680 (77 aa).

Positions 55-77 (IDPEGNDVTPEKLKREQQKNNLH) are disordered. Basic and acidic residues predominate over residues 63–77 (TPEKLKREQQKNNLH).

Belongs to the UPF0291 family.

It is found in the cytoplasm. This is UPF0291 protein RBAM_017680 from Bacillus velezensis (strain DSM 23117 / BGSC 10A6 / LMG 26770 / FZB42) (Bacillus amyloliquefaciens subsp. plantarum).